Consider the following 85-residue polypeptide: Cloacin immunity protein (85 aa).

At Lys-12 the chain carries N6-methyllysine.

Belongs to the cloacin immunity protein family.

Functionally, this protein complexes with cloacin protein in equimolar amounts and inhibits it by binding with high affinity to the C-terminal catalytic domain of cloacin. The sequence is that of Cloacin immunity protein (cim) from Escherichia coli.